The following is a 416-amino-acid chain: Cysteate synthase (416 aa).

K104 is modified (N6-(pyridoxal phosphate)lysine). N130 serves as a coordination point for pyridoxal 5'-phosphate.

Belongs to the threonine synthase family. Cysteate synthase subfamily. In terms of assembly, homotrimer. Requires pyridoxal 5'-phosphate as cofactor.

The catalysed reaction is O-phospho-L-serine + sulfite + H(+) = L-cysteate + phosphate. It functions in the pathway cofactor biosynthesis; coenzyme M biosynthesis. In terms of biological role, specifically catalyzes the beta-elimination of phosphate from L-phosphoserine and the beta-addition of sulfite to the dehydroalanine intermediate to produce L-cysteate. This is Cysteate synthase from Methanosarcina mazei (strain ATCC BAA-159 / DSM 3647 / Goe1 / Go1 / JCM 11833 / OCM 88) (Methanosarcina frisia).